We begin with the raw amino-acid sequence, 294 residues long: Acetylglutamate kinase (294 aa).

Substrate is bound by residues 63–64 (GG), R85, and N188.

Belongs to the acetylglutamate kinase family. ArgB subfamily.

It is found in the cytoplasm. It carries out the reaction N-acetyl-L-glutamate + ATP = N-acetyl-L-glutamyl 5-phosphate + ADP. Its pathway is amino-acid biosynthesis; L-arginine biosynthesis; N(2)-acetyl-L-ornithine from L-glutamate: step 2/4. Functionally, catalyzes the ATP-dependent phosphorylation of N-acetyl-L-glutamate. This is Acetylglutamate kinase from Methanococcus vannielii (strain ATCC 35089 / DSM 1224 / JCM 13029 / OCM 148 / SB).